A 513-amino-acid chain; its full sequence is Zinc finger CCCH-type with G patch domain-containing protein (513 aa).

The C3H1-type zinc finger occupies 155-178 (PCSYYLEGECRFDETKCRFSHGAL). Residues 252-261 (DQEEDDELSS) are compositionally biased toward acidic residues. The tract at residues 252–282 (DQEEDDELSSEESNSSMNNESSDEAESDMDD) is disordered. Residues 262–271 (EESNSSMNNE) show a composition bias toward low complexity. Residues 272–282 (SSDEAESDMDD) show a composition bias toward acidic residues. The G-patch domain maps to 312–358 (TRGIGSKLMEKMGYIHGTGLGSDGRGIVTPVSAQILPQGRSLDACME). Residues 478 to 495 (VQMQSHKQELATLQAQER) are compositionally biased toward polar residues. Residues 478 to 513 (VQMQSHKQELATLQAQERSLSKEQQTRKSKNKMFEF) are disordered. The segment covering 496-513 (SLSKEQQTRKSKNKMFEF) has biased composition (basic and acidic residues).

Its subcellular location is the nucleus. Transcription repressor. This is Zinc finger CCCH-type with G patch domain-containing protein from Drosophila erecta (Fruit fly).